The chain runs to 333 residues: Autoinducer 2 import system permease protein LsrD (333 aa).

10 consecutive transmembrane segments (helical) span residues 7–27 (YGWEFALAALLIIEILLFGIA), 45–65 (ICIGIVALPLTMVIVSGGIDI), 70–90 (TIGLCAISLGVMNQTGIPMAA), 91–111 (AIPLTLLVGAICGIINAALIL), 118–138 (LVITLGTLYLFGGSALLLSGI), 162–182 (LFGLPMPLMLFLLCVLICWLF), 212–232 (TLYLLYSLTGIASAIAAIVLV), 240–260 (SDLGASFLMPAITAVVLGGAN), 261–281 (IYGGSGSIIGTALAILLIGYL), and 288–308 (AGVPSQVSSALAGALLIIAVV).

Belongs to the binding-protein-dependent transport system permease family. AraH/RbsC subfamily. As to quaternary structure, the complex is composed of two ATP-binding proteins (LsrA), two transmembrane proteins (LsrC and LsrD) and a solute-binding protein (LsrB).

The protein resides in the cell inner membrane. Its function is as follows. Part of the ABC transporter complex LsrABCD involved in autoinducer 2 (AI-2) import. Probably responsible for the translocation of the substrate across the membrane. This is Autoinducer 2 import system permease protein LsrD (lsrD) from Photorhabdus laumondii subsp. laumondii (strain DSM 15139 / CIP 105565 / TT01) (Photorhabdus luminescens subsp. laumondii).